We begin with the raw amino-acid sequence, 705 residues long: Polyribonucleotide nucleotidyltransferase (705 aa).

Residues D486 and D492 each contribute to the Mg(2+) site. Residues P553–I612 form the KH domain. The 69-residue stretch at G622 to K690 folds into the S1 motif domain.

Belongs to the polyribonucleotide nucleotidyltransferase family. Component of the RNA degradosome, which is a multiprotein complex involved in RNA processing and mRNA degradation. Mg(2+) is required as a cofactor.

It is found in the cytoplasm. It catalyses the reaction RNA(n+1) + phosphate = RNA(n) + a ribonucleoside 5'-diphosphate. Involved in mRNA degradation. Catalyzes the phosphorolysis of single-stranded polyribonucleotides processively in the 3'- to 5'-direction. This Colwellia psychrerythraea (strain 34H / ATCC BAA-681) (Vibrio psychroerythus) protein is Polyribonucleotide nucleotidyltransferase.